Here is a 737-residue protein sequence, read N- to C-terminus: Phosphoribosylformylglycinamidine synthase subunit PurL (737 aa).

The active site involves H48. Positions 51 and 90 each coordinate ATP. A Mg(2+)-binding site is contributed by E92. Substrate is bound by residues 93–96 and R115; that span reads SHNH. The active-site Proton acceptor is the H94. D116 provides a ligand contact to Mg(2+). Q244 provides a ligand contact to substrate. D272 lines the Mg(2+) pocket. 316-318 lines the substrate pocket; that stretch reads ESQ. Residues D500 and G537 each coordinate ATP. N538 contacts Mg(2+). Position 540 (S540) interacts with substrate.

Belongs to the FGAMS family. Monomer. Part of the FGAM synthase complex composed of 1 PurL, 1 PurQ and 2 PurS subunits.

The protein localises to the cytoplasm. It carries out the reaction N(2)-formyl-N(1)-(5-phospho-beta-D-ribosyl)glycinamide + L-glutamine + ATP + H2O = 2-formamido-N(1)-(5-O-phospho-beta-D-ribosyl)acetamidine + L-glutamate + ADP + phosphate + H(+). It functions in the pathway purine metabolism; IMP biosynthesis via de novo pathway; 5-amino-1-(5-phospho-D-ribosyl)imidazole from N(2)-formyl-N(1)-(5-phospho-D-ribosyl)glycinamide: step 1/2. Its function is as follows. Part of the phosphoribosylformylglycinamidine synthase complex involved in the purines biosynthetic pathway. Catalyzes the ATP-dependent conversion of formylglycinamide ribonucleotide (FGAR) and glutamine to yield formylglycinamidine ribonucleotide (FGAM) and glutamate. The FGAM synthase complex is composed of three subunits. PurQ produces an ammonia molecule by converting glutamine to glutamate. PurL transfers the ammonia molecule to FGAR to form FGAM in an ATP-dependent manner. PurS interacts with PurQ and PurL and is thought to assist in the transfer of the ammonia molecule from PurQ to PurL. This Sulfurimonas denitrificans (strain ATCC 33889 / DSM 1251) (Thiomicrospira denitrificans (strain ATCC 33889 / DSM 1251)) protein is Phosphoribosylformylglycinamidine synthase subunit PurL.